We begin with the raw amino-acid sequence, 364 residues long: Heavy metal-associated isoprenylated plant protein 35 (364 aa).

A compositionally biased stretch (basic and acidic residues) spans 1-12 (MATDEMKSETKK). A disordered region spans residues 1 to 33 (MATDEMKSETKKTEHKQKQSTQIKQDLPPPTIP). The 64-residue stretch at 39 to 102 (YKSCTLKVSI…KLNKAGKNAE (64 aa)) folds into the HMA domain. A metal cation contacts are provided by C50 and C53. The tract at residues 101-265 (AEQLPEIPDP…PPTATDYDRP (165 aa)) is disordered. Residues 111 to 122 (VDNKPKPVDPKE) show a composition bias toward basic and acidic residues. Over residues 134-144 (QITNEATSSGI) the composition is skewed to polar residues. Basic and acidic residues-rich tracts occupy residues 154–169 (ECDKPESEKPVDEKCL) and 180–198 (VKEEKKDVLKEKDSGKEES). The span at 237 to 253 (SLATTNNPTDGPARTQS) shows a compositional bias: polar residues. The residue at position 361 (C361) is a Cysteine methyl ester. Residue C361 is the site of S-farnesyl cysteine attachment. Residues 362–364 (AIM) constitute a propeptide, removed in mature form.

It belongs to the HIPP family.

Its function is as follows. Heavy-metal-binding protein. The polypeptide is Heavy metal-associated isoprenylated plant protein 35 (Arabidopsis thaliana (Mouse-ear cress)).